Consider the following 384-residue polypeptide: Secreted LysM effector LysM14 (384 aa).

Positions 1–35 (MGWSPRWKVMLRGIFNAMISIHILLSLLFAHIATA) are cleaved as a signal peptide. The LysM domain occupies 64–112 (YTYTIQEGDTCAKLAQRYQVTTSNIETWNVGSWGWPGCAKIKQGDFVCL). A disordered region spans residues 185–220 (STTKSAASKTTTTSNPTTTSKTTITSKPTTTSKPTT).

Belongs to the secreted LysM effector family.

The protein localises to the secreted. Its function is as follows. Secreted LysM effector that might have a role in sequestration of chitin oligosaccharides (breakdown products of fungal cell walls that are released during invasion and act as triggers of host immunity) to dampen host defense. The polypeptide is Secreted LysM effector LysM14 (Penicillium expansum (Blue mold rot fungus)).